Consider the following 156-residue polypeptide: Small ribosomal subunit protein uS7 (156 aa).

This sequence belongs to the universal ribosomal protein uS7 family. As to quaternary structure, part of the 30S ribosomal subunit. Contacts proteins S9 and S11.

One of the primary rRNA binding proteins, it binds directly to 16S rRNA where it nucleates assembly of the head domain of the 30S subunit. Is located at the subunit interface close to the decoding center, probably blocks exit of the E-site tRNA. In Anaeromyxobacter dehalogenans (strain 2CP-C), this protein is Small ribosomal subunit protein uS7.